The chain runs to 185 residues: NADH-ubiquinone oxidoreductase chain 6 (185 aa).

Helical transmembrane passes span 4 to 24 (LTYY…IFII), 33 to 53 (ILYM…IGLG), 54 to 74 (IFSL…FLFI), 94 to 114 (LPLV…IYSN), and 159 to 179 (AFIL…PISI).

The protein belongs to the complex I subunit 6 family. Complex I is composed of 37 different subunits.

The protein resides in the mitochondrion membrane. It carries out the reaction a ubiquinone + NADH + 5 H(+)(in) = a ubiquinol + NAD(+) + 4 H(+)(out). Its function is as follows. Core subunit of the mitochondrial membrane respiratory chain NADH dehydrogenase (Complex I) that is believed to belong to the minimal assembly required for catalysis. Complex I functions in the transfer of electrons from NADH to the respiratory chain. The immediate electron acceptor for the enzyme is believed to be ubiquinone. The sequence is that of NADH-ubiquinone oxidoreductase chain 6 (ND6) from Yarrowia lipolytica (strain CLIB 122 / E 150) (Yeast).